Consider the following 91-residue polypeptide: Dynein light chain 1, cytoplasmic (91 aa).

This sequence belongs to the dynein light chain family. As to quaternary structure, homodimer. Cytoplasmic dynein consists of two catalytic heavy chains (HCs) and a number of non-catalytic subunits which present intermediate chains (ICs), light intermediate chains (LICs) and light chains (LCs). Component of the nuclear pore complex (NPC). NPC constitutes the exclusive means of nucleocytoplasmic transport. NPCs allow the passive diffusion of ions and small molecules and the active, nuclear transport receptor-mediated bidirectional transport of macromolecules such as proteins, RNAs, ribonucleoparticles (RNPs), and ribosomal subunits across the nuclear envelope. Due to its 8-fold rotational symmetry, all subunits are present with 8 copies or multiples thereof.

The protein resides in the cytoplasm. The protein localises to the cytoskeleton. It is found in the nucleus. Its subcellular location is the nuclear pore complex. In terms of biological role, acts as one of several non-catalytic accessory components of the cytoplasmic dynein complex that are thought to be involved in linking dynein to cargos and to adapter proteins that regulate dynein function. Cytoplasmic dynein 1 acts as a motor for the intracellular retrograde motility of vesicles and organelles along microtubules. May play a role in changing or maintaining the spatial distribution of cytoskeletal structures. Also a component of the nuclear pore complex. The polypeptide is Dynein light chain 1, cytoplasmic (DYN2) (Debaryomyces hansenii (strain ATCC 36239 / CBS 767 / BCRC 21394 / JCM 1990 / NBRC 0083 / IGC 2968) (Yeast)).